Here is a 224-residue protein sequence, read N- to C-terminus: Orotidine 5'-phosphate decarboxylase (224 aa).

Substrate is bound by residues aspartate 10, lysine 32, 59–68 (DLKLHDIPNT), threonine 115, arginine 175, glutamine 184, glycine 204, and arginine 205. Residue lysine 61 is the Proton donor of the active site.

Belongs to the OMP decarboxylase family. Type 1 subfamily. Homodimer.

The catalysed reaction is orotidine 5'-phosphate + H(+) = UMP + CO2. It functions in the pathway pyrimidine metabolism; UMP biosynthesis via de novo pathway; UMP from orotate: step 2/2. In terms of biological role, catalyzes the decarboxylation of orotidine 5'-monophosphate (OMP) to uridine 5'-monophosphate (UMP). This chain is Orotidine 5'-phosphate decarboxylase, found in Sphingopyxis alaskensis (strain DSM 13593 / LMG 18877 / RB2256) (Sphingomonas alaskensis).